The following is a 141-amino-acid chain: Galactose-6-phosphate isomerase subunit LacA 1 (141 aa).

It belongs to the LacAB/RpiB family. Heteromultimeric protein consisting of LacA and LacB.

The enzyme catalyses aldehydo-D-galactose 6-phosphate = keto-D-tagatose 6-phosphate. It participates in carbohydrate metabolism; D-galactose 6-phosphate degradation; D-tagatose 6-phosphate from D-galactose 6-phosphate: step 1/1. This chain is Galactose-6-phosphate isomerase subunit LacA 1, found in Streptococcus pyogenes serotype M18 (strain MGAS8232).